Consider the following 133-residue polypeptide: Holo-[acyl-carrier-protein] synthase (133 aa).

Residues Asp8 and Glu57 each coordinate Mg(2+).

Belongs to the P-Pant transferase superfamily. AcpS family. The cofactor is Mg(2+).

The protein localises to the cytoplasm. The enzyme catalyses apo-[ACP] + CoA = holo-[ACP] + adenosine 3',5'-bisphosphate + H(+). Its function is as follows. Transfers the 4'-phosphopantetheine moiety from coenzyme A to a Ser of acyl-carrier-protein. In Bartonella henselae (strain ATCC 49882 / DSM 28221 / CCUG 30454 / Houston 1) (Rochalimaea henselae), this protein is Holo-[acyl-carrier-protein] synthase.